We begin with the raw amino-acid sequence, 703 residues long: Heat shock protein 75 kDa, mitochondrial (703 aa).

The transit peptide at 1-56 (MARELRMLLLWGRRLRAPALAAACGGKPVLCPWRPPAQSWGPPRSLASSFHVGRPF) directs the protein to the mitochondrion. 2 residues coordinate ATP: asparagine 118 and aspartate 157. Residue serine 169 is modified to Phosphoserine. Asparagine 170 contributes to the ATP binding site. Residue threonine 173 is modified to Phosphothreonine. Positions 204 and 401 each coordinate ATP. N6-acetyllysine is present on residues lysine 423, lysine 430, and lysine 465. At threonine 493 the chain carries Phosphothreonine.

The protein belongs to the heat shock protein 90 family. Binds to the intracellular domain of tumor necrosis factor type 1 receptor. Binds to RB1. Interacts with SRC. Interacts with SDHA.

It localises to the mitochondrion. The protein localises to the mitochondrion inner membrane. Its subcellular location is the mitochondrion matrix. Its function is as follows. Chaperone that expresses an ATPase activity. Involved in maintaining mitochondrial function and polarization, downstream of PINK1 and mitochondrial complex I. Is a negative regulator of mitochondrial respiration able to modulate the balance between oxidative phosphorylation and aerobic glycolysis. The impact of TRAP1 on mitochondrial respiration is probably mediated by modulation of mitochondrial SRC and inhibition of SDHA. This Bos taurus (Bovine) protein is Heat shock protein 75 kDa, mitochondrial (TRAP1).